The primary structure comprises 156 residues: Small ribosomal subunit protein uS7 (156 aa).

It belongs to the universal ribosomal protein uS7 family. As to quaternary structure, part of the 30S ribosomal subunit. Contacts proteins S9 and S11.

Functionally, one of the primary rRNA binding proteins, it binds directly to 16S rRNA where it nucleates assembly of the head domain of the 30S subunit. Is located at the subunit interface close to the decoding center, probably blocks exit of the E-site tRNA. The sequence is that of Small ribosomal subunit protein uS7 from Geobacillus sp. (strain WCH70).